A 644-amino-acid chain; its full sequence is Ribonuclease R (644 aa).

Residues 211–529 (RINYSHIPFI…LHRLLKELLF (319 aa)) form the RNB domain. The S1 motif domain occupies 573–644 (LELLEKEFLG…ITERIKEHVS (72 aa)).

It belongs to the RNR ribonuclease family. RNase R subfamily.

The protein localises to the cytoplasm. It catalyses the reaction Exonucleolytic cleavage in the 3'- to 5'-direction to yield nucleoside 5'-phosphates.. 3'-5' exoribonuclease that releases 5'-nucleoside monophosphates and is involved in maturation of structured RNAs. The polypeptide is Ribonuclease R (Helicobacter pylori (strain ATCC 700392 / 26695) (Campylobacter pylori)).